The chain runs to 894 residues: B-cell lymphoma/leukemia 11B (894 aa).

2 positions are modified to phosphoserine: serine 97 and serine 110. Threonine 120 is modified (phosphothreonine). At serine 129 the chain carries Phosphoserine. Lysine 137 participates in a covalent cross-link: Glycyl lysine isopeptide (Lys-Gly) (interchain with G-Cter in SUMO2). The C2H2-type 1 zinc finger occupies 221–251; the sequence is YICTTCKQPFNSAWFLLQHAQNTHGFRIYLE. Phosphoserine is present on serine 256. The residue at position 260 (threonine 260) is a Phosphothreonine. Serine 277 carries the phosphoserine modification. At arginine 293 the chain carries Omega-N-methylarginine. Arginine 322 carries the post-translational modification Asymmetric dimethylarginine. The residue at position 358 (serine 358) is a Phosphoserine. Disordered regions lie at residues 370–428 and 471–583; these read LAGN…KSKS and KRHM…GGGA. Threonine 376 is subject to Phosphothreonine. Residues serine 381, serine 398, and serine 401 each carry the phosphoserine modification. Positions 396 to 423 are enriched in pro residues; the sequence is QPSPKSPFLSTPPLPPMPPGGTPPPQPP. Phosphothreonine occurs at positions 406 and 417. 2 consecutive C2H2-type zinc fingers follow at residues 427-454 and 455-482; these read KSCE…GEKP and YKCQ…HKAG. Over residues 471–480 the composition is skewed to basic residues; it reads KRHMKTHMHK. A phosphoserine mark is found at serine 483, serine 488, serine 496, and serine 497. Residues 511–529 show a composition bias toward basic and acidic residues; it reads KAADGDFRHHESDPSLGHE. A compositionally biased stretch (acidic residues) spans 530-546; it reads PEEEDEEEEEEEEELLL. The segment covering 568–583 has biased composition (gly residues); the sequence is NGGGGVPGVPGAGGGA. Glycyl lysine isopeptide (Lys-Gly) (interchain with G-Cter in SUMO2) cross-links involve residues lysine 591 and lysine 617. The interval 653–680 is disordered; it reads GRGGGFAPGTEPFPGLFPRKPAPLPSPG. Serine 678 carries the post-translational modification Phosphoserine. Residues lysine 686 and lysine 723 each participate in a glycyl lysine isopeptide (Lys-Gly) (interchain with G-Cter in SUMO2) cross-link. Residues 737 to 752 show a composition bias toward polar residues; that stretch reads FATSSEHSSENGSLRF. Residues 737–794 are disordered; that stretch reads FATSSEHSSENGSLRFSTPPGDLLDGGLSGRSGTASGGSTPHLGGPGPGRPSSKEGRR. Residues 753 to 775 are compositionally biased toward low complexity; it reads STPPGDLLDGGLSGRSGTASGGS. Threonine 754 bears the Phosphothreonine mark. Serine 765 and serine 772 each carry phosphoserine. 3 C2H2-type zinc fingers span residues 796–823, 824–853, and 854–884; these read DTCE…GERP, YKCE…GKEV, and YRCD…LLTN. Position 851 is an N6-acetyllysine (lysine 851). Lysine 887 participates in a covalent cross-link: Glycyl lysine isopeptide (Lys-Gly) (interchain with G-Cter in SUMO2).

Interacts with TFCOUP1, SIRT1, ARP1 and EAR2. Interacts with EP300; the interaction is detected in activated T-lymphocytes, but not under resting conditions. In terms of processing, sumoylated with SUMO1. As to expression, highly expressed in brain and in malignant T-cell lines derived from patients with adult T-cell leukemia/lymphoma.

It localises to the nucleus. Functionally, key regulator of both differentiation and survival of T-lymphocytes during thymocyte development in mammals. Essential in controlling the responsiveness of hematopoietic stem cells to chemotactic signals by modulating the expression of the receptors CCR7 and CCR9, which direct the movement of progenitor cells from the bone marrow to the thymus. Is a regulator of IL2 promoter and enhances IL2 expression in activated CD4(+) T-lymphocytes. Tumor-suppressor that represses transcription through direct, TFCOUP2-independent binding to a GC-rich response element. May also function in the P53-signaling pathway. This chain is B-cell lymphoma/leukemia 11B (BCL11B), found in Homo sapiens (Human).